The primary structure comprises 1093 residues: Regulatory protein SWI4 (1093 aa).

Residues 37–147 form the HTH APSES-type domain; the sequence is IEIATYSETD…FQFDPNNPPP (111 aa). Residues 71–92 constitute a DNA-binding region (H-T-H motif); that stretch reads ITQVFKIAQFSKTKRTKILEKE. Residues 138–210 are disordered; the sequence is FQFDPNNPPP…NQPNPSPLQN (73 aa). The span at 152 to 172 shows a compositional bias: polar residues; it reads NSILRKTSPGTKITSPSSYNK. Residues 179-201 are compositionally biased toward low complexity; it reads SSSSTSATTTAANKKGKKNASIN. Serine 255 is modified (phosphoserine). Positions 448 to 457 are enriched in low complexity; that stretch reads NSMNMSSRSM. The segment at 448–468 is disordered; the sequence is NSMNMSSRSMTPFSAGNTSSQ. Over residues 458 to 468 the composition is skewed to polar residues; it reads TPFSAGNTSSQ. ANK repeat units lie at residues 520–549 and 641–670; these read QGHTPLHWATAMANIPLIKMLITLNANALQ and IGNTPLHLSALNLNFEVYNRLVYLGASTDI. Position 806 is a phosphoserine (serine 806). Disordered stretches follow at residues 813-855 and 973-1017; these read RSQS…SSLL and QDEE…DAKF. Over residues 818–837 the composition is skewed to basic and acidic residues; the sequence is SDEKEKAKDNENQVEKKKDP. A compositionally biased stretch (low complexity) spans 846–855; the sequence is PSLESPSSLL. Positions 1000–1010 are enriched in polar residues; sequence KSTSETSSPKN.

Component of the transcription complex SCB-binding factor (SBF) composed of SWI6 and SWI4. Interacts with MSA2.

Part of a complex involved in cell-cycle-dependent transcription. SWI4 and SWI6 are required for formation of the cell-cycle box factor-DNA complex. The repeated element in the upstream region of HO (5'-CACGAAAA-3') is called the cell cycle box (CCB). The sequence is that of Regulatory protein SWI4 (SWI4) from Saccharomyces cerevisiae (strain ATCC 204508 / S288c) (Baker's yeast).